The chain runs to 248 residues: 1-(5-phosphoribosyl)-5-[(5-phosphoribosylamino)methylideneamino] imidazole-4-carboxamide isomerase (248 aa).

The Proton acceptor role is filled by aspartate 8. The active-site Proton donor is the aspartate 131.

This sequence belongs to the HisA/HisF family.

The protein localises to the cytoplasm. It carries out the reaction 1-(5-phospho-beta-D-ribosyl)-5-[(5-phospho-beta-D-ribosylamino)methylideneamino]imidazole-4-carboxamide = 5-[(5-phospho-1-deoxy-D-ribulos-1-ylimino)methylamino]-1-(5-phospho-beta-D-ribosyl)imidazole-4-carboxamide. Its pathway is amino-acid biosynthesis; L-histidine biosynthesis; L-histidine from 5-phospho-alpha-D-ribose 1-diphosphate: step 4/9. The sequence is that of 1-(5-phosphoribosyl)-5-[(5-phosphoribosylamino)methylideneamino] imidazole-4-carboxamide isomerase from Cupriavidus taiwanensis (strain DSM 17343 / BCRC 17206 / CCUG 44338 / CIP 107171 / LMG 19424 / R1) (Ralstonia taiwanensis (strain LMG 19424)).